A 176-amino-acid chain; its full sequence is Pituitary adenylate cyclase-activating polypeptide (176 aa).

Positions 1–24 (MTMCSGARLALLVYGILMHSSVYG) are cleaved as a signal peptide. Positions 25–80 (SPAASGLRFPGIRPENEAYDEDGNPQQDFYDSEPPGVGSPASALRDAYALYYPAEE) are excised as a propeptide. Disordered regions lie at residues 36–62 (IRPENEAYDEDGNPQQDFYDSEPPGVG) and 115–134 (GTPGGGADDDSEPLSKRHSD). The tract at residues 150-158 (VKKYLAAVL) is important for receptor binding. L158 carries the leucine amide modification. Residue K169 is modified to Lysine amide. A propeptide spanning residues 173–176 (IPYL) is cleaved from the precursor.

Belongs to the glucagon family.

It is found in the secreted. PACAP is a neuropeptide involved in diverse array of physiological processes through activating the PACAP subfamily of class B1 G protein-coupled receptors: VIP receptor 1 (VIPR1), VIP receptor 2 (VIPR2), and PACAP type I receptor (ADCYAP1R1). Exerts neuroprotective and general cytoprotective effects due to anti-apoptotic, anti-inflammatory, and antioxidant actions. Promotes neuron projection development through the RAPGEF2/Rap1/B-Raf/ERK pathway. In chromaffin cells, induces long-lasting increase of intracellular calcium concentrations and neuroendocrine secretion. Involved in the control of glucose homeostasis, induces insulin secretion by pancreatic beta cells. PACAP exists in two bioactive forms from proteolysis of the same precursor protein, PACAP27 and PACAP38, which differ by eleven amino acid residues in the C-terminus. This chain is Pituitary adenylate cyclase-activating polypeptide (ADCYAP1), found in Ovis aries (Sheep).